The sequence spans 396 residues: L-cysteine desulfidase (396 aa).

The active-site Proton acceptor is the Cys-23. Residues Cys-287, Cys-329, and Cys-336 each contribute to the [4Fe-4S] cluster site.

The protein belongs to the L-cysteine desulfidase family. As to quaternary structure, homotrimer. Requires [4Fe-4S] cluster as cofactor.

The enzyme catalyses L-cysteine + H2O = hydrogen sulfide + pyruvate + NH4(+) + H(+). Catalyzes the cleavage of L-cysteine to form 2-aminoprop-2-enoate and sulfide. The former then spontaneously hydrolyzes to pyruvate and NH(3). May be responsible for the production of sulfide required for the biosynthesis of iron-sulfur centers in this archaea. The protein is L-cysteine desulfidase of Methanococcus maripaludis (strain DSM 14266 / JCM 13030 / NBRC 101832 / S2 / LL).